The following is a 426-amino-acid chain: 3-phosphoshikimate 1-carboxyvinyltransferase (426 aa).

Residues Lys-22, Ser-23, and Arg-27 each coordinate 3-phosphoshikimate. Lys-22 provides a ligand contact to phosphoenolpyruvate. Residues Gly-96 and Arg-124 each coordinate phosphoenolpyruvate. 3-phosphoshikimate-binding residues include Ser-170, Ser-171, Gln-172, Ser-198, Asp-314, Asn-337, and Lys-341. Gln-172 provides a ligand contact to phosphoenolpyruvate. The active-site Proton acceptor is the Asp-314. Arg-345, Arg-387, and Lys-412 together coordinate phosphoenolpyruvate.

It belongs to the EPSP synthase family. As to quaternary structure, monomer.

The protein localises to the cytoplasm. It carries out the reaction 3-phosphoshikimate + phosphoenolpyruvate = 5-O-(1-carboxyvinyl)-3-phosphoshikimate + phosphate. It participates in metabolic intermediate biosynthesis; chorismate biosynthesis; chorismate from D-erythrose 4-phosphate and phosphoenolpyruvate: step 6/7. Catalyzes the transfer of the enolpyruvyl moiety of phosphoenolpyruvate (PEP) to the 5-hydroxyl of shikimate-3-phosphate (S3P) to produce enolpyruvyl shikimate-3-phosphate and inorganic phosphate. The polypeptide is 3-phosphoshikimate 1-carboxyvinyltransferase (Aliivibrio fischeri (strain ATCC 700601 / ES114) (Vibrio fischeri)).